Consider the following 368-residue polypeptide: Aspartate-semialdehyde dehydrogenase (368 aa).

Residues 10 to 13 (RGMV), 37 to 38 (TS), and Gln-72 contribute to the NADP(+) site. Arg-101 lines the phosphate pocket. The active-site Acyl-thioester intermediate is Cys-134. Residues 160–161 (SG) and Pro-191 contribute to the NADP(+) site. Glu-239 lines the substrate pocket. Lys-242 lines the phosphate pocket. Substrate is bound at residue Arg-266. The Proton acceptor role is filled by His-273. Gln-349 is a binding site for NADP(+).

Belongs to the aspartate-semialdehyde dehydrogenase family. As to quaternary structure, homodimer.

It catalyses the reaction L-aspartate 4-semialdehyde + phosphate + NADP(+) = 4-phospho-L-aspartate + NADPH + H(+). The protein operates within amino-acid biosynthesis; L-lysine biosynthesis via DAP pathway; (S)-tetrahydrodipicolinate from L-aspartate: step 2/4. It participates in amino-acid biosynthesis; L-methionine biosynthesis via de novo pathway; L-homoserine from L-aspartate: step 2/3. Its pathway is amino-acid biosynthesis; L-threonine biosynthesis; L-threonine from L-aspartate: step 2/5. In terms of biological role, catalyzes the NADPH-dependent formation of L-aspartate-semialdehyde (L-ASA) by the reductive dephosphorylation of L-aspartyl-4-phosphate. This is Aspartate-semialdehyde dehydrogenase from Azotobacter vinelandii.